A 152-amino-acid polypeptide reads, in one-letter code: Protein IpgF (152 aa).

The signal sequence occupies residues 1 to 17 (MSRFVFILLCFIPHLGR).

This sequence belongs to the IagB/IpgF/P19 family.

This is Protein IpgF (ipgF) from Shigella flexneri.